Consider the following 345-residue polypeptide: L-threonine 3-dehydrogenase (345 aa).

Cys-42 provides a ligand contact to Zn(2+). Residues Thr-44 and His-47 each act as charge relay system in the active site. Zn(2+) is bound by residues His-67, Glu-68, Cys-97, Cys-100, Cys-103, and Cys-111. NAD(+)-binding positions include Ile-179, Asp-199, Arg-204, 266–268 (LGI), and 290–291 (IY).

It belongs to the zinc-containing alcohol dehydrogenase family. As to quaternary structure, homotetramer. The cofactor is Zn(2+).

The protein resides in the cytoplasm. It carries out the reaction L-threonine + NAD(+) = (2S)-2-amino-3-oxobutanoate + NADH + H(+). It participates in amino-acid degradation; L-threonine degradation via oxydo-reductase pathway; glycine from L-threonine: step 1/2. Functionally, catalyzes the NAD(+)-dependent oxidation of L-threonine to 2-amino-3-ketobutyrate. The polypeptide is L-threonine 3-dehydrogenase (Sinorhizobium fredii (strain NBRC 101917 / NGR234)).